Here is a 330-residue protein sequence, read N- to C-terminus: MKHWYDLITEAQSVEKIEEIRISLFGKKGVLAAEFARMKEASDEEKSKIAQELNIHKTTLMNELVQRKITLQTQELQEHMKSEAIDVTMFSSSSESGALHPVMQTMDRIVEYFSSMNFTVKTGTMVEDDFNNFEALNLPKYHPARDMQDTFYFKDEMLLRTHTSPVQIRTMMSSKPPIRMIAPGAVFRRDYDITHTPMFHQVEGLLVDKEGAVSFANLKFILEDFLKYMFGDVEVRFRPSFFPFTEPSAEVDISCVFCKGSGCRVCSKTGWLEVLGCGIVDPNVFEAVKYQNVSGYAFGLGVERFAMLIHQIGDLRSLFEGDIKLLEQFR.

Glutamate 246 contacts Mg(2+).

This sequence belongs to the class-II aminoacyl-tRNA synthetase family. Phe-tRNA synthetase alpha subunit type 1 subfamily. Tetramer of two alpha and two beta subunits. Mg(2+) is required as a cofactor.

It localises to the cytoplasm. The enzyme catalyses tRNA(Phe) + L-phenylalanine + ATP = L-phenylalanyl-tRNA(Phe) + AMP + diphosphate + H(+). The chain is Phenylalanine--tRNA ligase alpha subunit from Sulfurimonas denitrificans (strain ATCC 33889 / DSM 1251) (Thiomicrospira denitrificans (strain ATCC 33889 / DSM 1251)).